Reading from the N-terminus, the 394-residue chain is MSALRSVAGLLQRWLLPARPAGLYDRQLVVLALALMAVGLVIVASASIPEGIAINNDPFMFVKRHGLFLVMALGISWFVLQVPMARWQHYNGPMLVLAILMLVLVLLVGRSVNGSIRWLPLGPFNLQPAEFGKLALFVYLAGYLVRRQSEVRERFIGFMKPMAVLFVVAILLLAQPDLGSVVVMFVTSLGMLFLAGARLGQFIGLILVGVSAVVTLVIAEPYRMRRVTSFLDPWADPFGSGYQLTQSLMAFGRGSWFGEGLGNSIQKMEYLPEAHTDFVFAILGEELGYAGVLGALFLIFALSFKALKLGHQALVAERLYEGYLAIGIGIWFSFQTFVNVGAASGMMPTKGLTLPLVSYGGSSLIIMMVAVSMLVRIDFELRQASAQARVREVS.

The Cytoplasmic portion of the chain corresponds to 1 to 27; the sequence is MSALRSVAGLLQRWLLPARPAGLYDRQ. The helical transmembrane segment at 28–48 threads the bilayer; it reads LVVLALALMAVGLVIVASASI. The Periplasmic segment spans residues 49 to 64; it reads PEGIAINNDPFMFVKR. A helical transmembrane segment spans residues 65–85; it reads HGLFLVMALGISWFVLQVPMA. Topologically, residues 86-88 are cytoplasmic; the sequence is RWQ. Residues 89-109 traverse the membrane as a helical segment; the sequence is HYNGPMLVLAILMLVLVLLVG. Over 110-123 the chain is Periplasmic; that stretch reads RSVNGSIRWLPLGP. The chain crosses the membrane as a helical span at residues 124 to 144; sequence FNLQPAEFGKLALFVYLAGYL. Residues 145–154 lie on the Cytoplasmic side of the membrane; the sequence is VRRQSEVRER. The chain crosses the membrane as a helical span at residues 155-175; it reads FIGFMKPMAVLFVVAILLLAQ. Pro176 is a topological domain (periplasmic). Residues 177–197 traverse the membrane as a helical segment; that stretch reads DLGSVVVMFVTSLGMLFLAGA. A topological domain (cytoplasmic) is located at residue Arg198. A helical membrane pass occupies residues 199–219; sequence LGQFIGLILVGVSAVVTLVIA. Over 220-279 the chain is Periplasmic; it reads EPYRMRRVTSFLDPWADPFGSGYQLTQSLMAFGRGSWFGEGLGNSIQKMEYLPEAHTDFV. A helical transmembrane segment spans residues 280–300; it reads FAILGEELGYAGVLGALFLIF. Over 301-322 the chain is Cytoplasmic; it reads ALSFKALKLGHQALVAERLYEG. A helical membrane pass occupies residues 323-343; it reads YLAIGIGIWFSFQTFVNVGAA. Residues 344–354 are Periplasmic-facing; the sequence is SGMMPTKGLTL. A helical transmembrane segment spans residues 355-375; the sequence is PLVSYGGSSLIIMMVAVSMLV. The Cytoplasmic portion of the chain corresponds to 376 to 394; sequence RIDFELRQASAQARVREVS.

It belongs to the SEDS family. FtsW subfamily.

The protein localises to the cell inner membrane. It catalyses the reaction [GlcNAc-(1-&gt;4)-Mur2Ac(oyl-L-Ala-gamma-D-Glu-L-Lys-D-Ala-D-Ala)](n)-di-trans,octa-cis-undecaprenyl diphosphate + beta-D-GlcNAc-(1-&gt;4)-Mur2Ac(oyl-L-Ala-gamma-D-Glu-L-Lys-D-Ala-D-Ala)-di-trans,octa-cis-undecaprenyl diphosphate = [GlcNAc-(1-&gt;4)-Mur2Ac(oyl-L-Ala-gamma-D-Glu-L-Lys-D-Ala-D-Ala)](n+1)-di-trans,octa-cis-undecaprenyl diphosphate + di-trans,octa-cis-undecaprenyl diphosphate + H(+). Its pathway is cell wall biogenesis; peptidoglycan biosynthesis. Functionally, peptidoglycan polymerase that is essential for cell division. The protein is Probable peptidoglycan glycosyltransferase FtsW of Aeromonas salmonicida (strain A449).